Reading from the N-terminus, the 172-residue chain is Large ribosomal subunit protein uL10 (172 aa).

This sequence belongs to the universal ribosomal protein uL10 family. Part of the ribosomal stalk of the 50S ribosomal subunit. The N-terminus interacts with L11 and the large rRNA to form the base of the stalk. The C-terminus forms an elongated spine to which L12 dimers bind in a sequential fashion forming a multimeric L10(L12)X complex.

Forms part of the ribosomal stalk, playing a central role in the interaction of the ribosome with GTP-bound translation factors. This is Large ribosomal subunit protein uL10 from Syntrophotalea carbinolica (strain DSM 2380 / NBRC 103641 / GraBd1) (Pelobacter carbinolicus).